Here is a 236-residue protein sequence, read N- to C-terminus: Protein N-lysine methyltransferase METTL21A (236 aa).

S-adenosyl-L-methionine is bound by residues Trp-47, 73-75 (GAG), Asp-112, Trp-143, and Ala-161.

This sequence belongs to the methyltransferase superfamily. METTL21 family. Interacts with heat shock 70 family members; at least some of these proteins are methylation substrates.

The protein localises to the cytoplasm. It catalyses the reaction L-lysyl-[protein] + 3 S-adenosyl-L-methionine = N(6),N(6),N(6)-trimethyl-L-lysyl-[protein] + 3 S-adenosyl-L-homocysteine + 3 H(+). Its function is as follows. Protein-lysine methyltransferase that selectively trimethylates residues in heat shock protein 70 (HSP70) family members. Contributes to the in vivo trimethylation of Lys residues in HSPA1 and HSPA8. In vitro methylates 'Lys-561' in HSPA1, 'Lys-564' in HSPA2, 'Lys-585' in HSPA5, 'Lys-563' in HSPA6 and 'Lys-561' in HSPA8. The sequence is that of Protein N-lysine methyltransferase METTL21A (METTL21A) from Pongo abelii (Sumatran orangutan).